A 158-amino-acid polypeptide reads, in one-letter code: 6,7-dimethyl-8-ribityllumazine synthase (158 aa).

5-amino-6-(D-ribitylamino)uracil is bound by residues Phe-22, 57 to 59, and 81 to 83; these read SYE and TVI. His-89 (proton donor) is an active-site residue. Phe-114 contacts 5-amino-6-(D-ribitylamino)uracil. Arg-128 is a binding site for (2S)-2-hydroxy-3-oxobutyl phosphate.

This sequence belongs to the DMRL synthase family. Forms an icosahedral capsid composed of 60 subunits, arranged as a dodecamer of pentamers.

The catalysed reaction is (2S)-2-hydroxy-3-oxobutyl phosphate + 5-amino-6-(D-ribitylamino)uracil = 6,7-dimethyl-8-(1-D-ribityl)lumazine + phosphate + 2 H2O + H(+). Its pathway is cofactor biosynthesis; riboflavin biosynthesis; riboflavin from 2-hydroxy-3-oxobutyl phosphate and 5-amino-6-(D-ribitylamino)uracil: step 1/2. Functionally, catalyzes the formation of 6,7-dimethyl-8-ribityllumazine by condensation of 5-amino-6-(D-ribitylamino)uracil with 3,4-dihydroxy-2-butanone 4-phosphate. This is the penultimate step in the biosynthesis of riboflavin. This Blochmanniella pennsylvanica (strain BPEN) protein is 6,7-dimethyl-8-ribityllumazine synthase.